We begin with the raw amino-acid sequence, 179 residues long: Tegument protein UL55 homolog (179 aa).

It belongs to the alphaherpesvirinae HHV-1 UL55 family.

It is found in the virion tegument. It localises to the host nucleus matrix. The chain is Tegument protein UL55 homolog from Homo sapiens (Human).